A 429-amino-acid chain; its full sequence is Enolase 2 (429 aa).

Position 163 (Gln163) interacts with (2R)-2-phosphoglycerate. Glu205 functions as the Proton donor in the catalytic mechanism. Mg(2+) contacts are provided by Asp242, Glu286, and Asp313. Residues Lys338, Arg367, Ser368, and Lys389 each coordinate (2R)-2-phosphoglycerate. The active-site Proton acceptor is the Lys338.

The protein belongs to the enolase family. The cofactor is Mg(2+).

The protein localises to the cytoplasm. It localises to the secreted. The protein resides in the cell surface. It catalyses the reaction (2R)-2-phosphoglycerate = phosphoenolpyruvate + H2O. It functions in the pathway carbohydrate degradation; glycolysis; pyruvate from D-glyceraldehyde 3-phosphate: step 4/5. In terms of biological role, catalyzes the reversible conversion of 2-phosphoglycerate (2-PG) into phosphoenolpyruvate (PEP). It is essential for the degradation of carbohydrates via glycolysis. The chain is Enolase 2 from Lactiplantibacillus plantarum (strain ATCC BAA-793 / NCIMB 8826 / WCFS1) (Lactobacillus plantarum).